The following is a 588-amino-acid chain: Ribonuclease Y (588 aa).

Residues 7–27 (VLLVAVLLLALIVLGAVLVGV) traverse the membrane as a helical segment. The disordered stretch occupies residues 130–162 (ARRSGEREAAVLATTTREQAAEVERRAARMDDR). Over residues 148-162 (QAAEVERRAARMDDR) the composition is skewed to basic and acidic residues. Residues 278–359 (VVSVLHLPGD…HRIEEVHDLA (82 aa)) form the KH domain. The 94-residue stretch at 404 to 497 (VLKHLVETAH…TQASDACSGG (94 aa)) folds into the HD domain.

The protein belongs to the RNase Y family.

The protein localises to the cell membrane. Its function is as follows. Endoribonuclease that initiates mRNA decay. The chain is Ribonuclease Y from Salinispora arenicola (strain CNS-205).